The primary structure comprises 143 residues: Putative transcriptional regulatory protein PH0763 (143 aa).

It belongs to the Tfx family.

In terms of biological role, putative transcriptional regulator. The polypeptide is Putative transcriptional regulatory protein PH0763 (Pyrococcus horikoshii (strain ATCC 700860 / DSM 12428 / JCM 9974 / NBRC 100139 / OT-3)).